The chain runs to 623 residues: MSSQVIPALPKTFSSSLDLWREKNDQLVRQAKQLTRDSRPSLRRQQSAQDTLEGLRELLLTLQGLPAAVPALPLELTVLCNCIILRASLVQAFTEDLTQDLQRGLERVLEAQHHLEPKSQQGLKELWHSVLSASSLPPELLPALHCLASLQAVFWMSTDHLEDLTLLLQTLNGSQTQSSEDLLLLLKSWSPPAEESPAPLILQDAESLRDVLLTAFACRQGFQELITGSLPHAQSNLHEAASGLCPPSVLVQVYTALGACLRKMGNPQRALLYLTEALKVGTTCALPLLEASRVYRQLGDRAAELESLELLVEALSATHSSETFKSLIEVELLLPQPDPASPLHCGTQSQAKHLLASRCLQTGRAEDAAEHYLDLLAMLLGGSETRFSPPTSSLGPCIPELCLEAAAALIQAGRALDALTVCEELLNRTSSLLPKMSSLWENARKRAKELPCCPVWVSATHLLQGQAWSQLKAQKEALSEFSQCLELLFRTLPEDKEQGSDCEQKCRSDVALKQLRVAALISRGLEWVASGQDTKALSDFLLSVQICPGNRDGSFYLLQTLKRLDRKNEASAFWREAHSQLPLEDAAGSLPLYLETCLSWIHPPNREAFLEEFGTSVLESCVL.

4 TPR repeats span residues 251–284 (VQVY…GTTC), 349–382 (SQAK…LLGG), 458–491 (SATH…LFRT), and 517–550 (VAAL…CPGN).

In terms of assembly, belongs to the multisubunit FA complex composed of FANCA, FANCB, FANCC, FANCE, FANCF, FANCG, FANCL/PHF9 and FANCM. In complex with FANCF, FANCA and FANCL, but not with FANCC, nor FANCE, interacts with HES1; this interaction may be essential for the stability and nuclear localization of FA core complex proteins. The complex with FANCC and FANCG may also include EIF2AK2 and HSP70. In terms of tissue distribution, highest expression levels in spleen, thymus and testis.

The protein localises to the nucleus. DNA repair protein that may operate in a postreplication repair or a cell cycle checkpoint function. May be implicated in interstrand DNA cross-link repair and in the maintenance of normal chromosome stability. Candidate tumor suppressor gene. The protein is Fanconi anemia group G protein homolog (Fancg) of Mus musculus (Mouse).